A 194-amino-acid polypeptide reads, in one-letter code: MMRLRRLLERMLRRCCFRDCSVRLTKSLCFKKLIEFDATKNQIVTKLQRLKKKFNNAVKNARKKGQTEDEVEYAKESEKKRFDLSIMIWGSNGVLVAGKSSKKKVAPKEMKPEETDAKVVNEGLSIGREMVPFGSSCGLDESKLTTGWENVEDGAEKREVEEKWKKFKDKLFELLYERSVLMNKTEAMMFKAES.

Belongs to the GeBP family.

This Arabidopsis thaliana (Mouse-ear cress) protein is Probable transcription factor At4g00130.